A 228-amino-acid polypeptide reads, in one-letter code: Triosephosphate isomerase (228 aa).

Position 11–13 (11–13) interacts with substrate; the sequence is NFK. His95 functions as the Electrophile in the catalytic mechanism. Glu143 serves as the catalytic Proton acceptor. Residues Ile148, Gly183, and 204 to 205 contribute to the substrate site; that span reads AS.

This sequence belongs to the triosephosphate isomerase family. As to quaternary structure, homotetramer; dimer of dimers.

It localises to the cytoplasm. It catalyses the reaction D-glyceraldehyde 3-phosphate = dihydroxyacetone phosphate. Its pathway is carbohydrate biosynthesis; gluconeogenesis. The protein operates within carbohydrate degradation; glycolysis; D-glyceraldehyde 3-phosphate from glycerone phosphate: step 1/1. Functionally, involved in the gluconeogenesis. Catalyzes stereospecifically the conversion of dihydroxyacetone phosphate (DHAP) to D-glyceraldehyde-3-phosphate (G3P). The polypeptide is Triosephosphate isomerase (Pyrococcus horikoshii (strain ATCC 700860 / DSM 12428 / JCM 9974 / NBRC 100139 / OT-3)).